A 133-amino-acid polypeptide reads, in one-letter code: Small ribosomal subunit protein uS19 (133 aa).

The protein belongs to the universal ribosomal protein uS19 family. As to quaternary structure, part of the 30S ribosomal subunit.

Functionally, protein S19 forms a complex with S13 that binds strongly to the 16S ribosomal RNA. In Thermococcus kodakarensis (strain ATCC BAA-918 / JCM 12380 / KOD1) (Pyrococcus kodakaraensis (strain KOD1)), this protein is Small ribosomal subunit protein uS19.